The chain runs to 135 residues: Inner membrane protein YgfX (135 aa).

Topologically, residues 1-11 (MVLWQSDLRVS) are cytoplasmic. The interval 1–96 (MVLWQSDLRV…APWMIKSGMM (96 aa)) is not required to inhibit FtsZ or MreB polymerization. The helical transmembrane segment at 12-32 (WRAQWLSLLIHGLVAAVILLM) threads the bilayer. At 33–37 (PWPLS) the chain is on the periplasmic side. A helical transmembrane segment spans residues 38 to 54 (YTPLWMVLLSLVVFDCV). The Cytoplasmic segment spans residues 55 to 135 (RSQRRINARQ…RILLQQETQR (81 aa)).

In terms of assembly, interacts with MreB and FtsZ; interaction with the latter requires FtsZ residues 33-49.

Its subcellular location is the cell inner membrane. In terms of biological role, a probable inner membrane protein. Has been shown not to be a toxin, no effects on growth are seen in LB or minimal medium up to 6 or 21 hours (respectively) after induction of expression. Interacts with cytoskeletal proteins FtsZ and MreB; inhibits FtsZ GTP-dependent polymerization as well as MreB ATP-dependent polymerization. Restores production of prodigiosin antibiotic (Pig) in Serratia strains with deletions of sdhE-ygfX; overexpression of this protein and CptB also restores Pig production to a slightly lesser extent in Serratia. This is Inner membrane protein YgfX from Escherichia coli (strain K12).